A 167-amino-acid polypeptide reads, in one-letter code: HVA22-like protein b (167 aa).

The next 3 membrane-spanning stretches (helical) occupy residues 18–38 (VIAGPVISLVYPLYASVRAIE), 47–67 (QWLTYWALYSLIKLFELTFFR), and 68–88 (LLEWIPLYPYAKLALTSWLVL).

It belongs to the DP1 family. In terms of tissue distribution, predominantly expressed in flower buds.

Its subcellular location is the membrane. This is HVA22-like protein b (HVA22B) from Arabidopsis thaliana (Mouse-ear cress).